Here is a 137-residue protein sequence, read N- to C-terminus: MMQPKKTKFRKAHKGRIHGVASSGATLAFGQFGLKAMEPDRVTARQIEAARRALTRHMKRAGRVWIRVFPDLPVSKKPAEVRMGSGKGSPELWVARVKPGRVMFEIDGVSNQIAREALLLAAAKLPIKTRFVERIAE.

Belongs to the universal ribosomal protein uL16 family. In terms of assembly, part of the 50S ribosomal subunit.

Binds 23S rRNA and is also seen to make contacts with the A and possibly P site tRNAs. The chain is Large ribosomal subunit protein uL16 from Bradyrhizobium sp. (strain BTAi1 / ATCC BAA-1182).